Here is a 63-residue protein sequence, read N- to C-terminus: Keratin-associated protein 19-7 (63 aa).

The protein belongs to the KRTAP type 19 family. In terms of assembly, interacts with hair keratins.

In terms of biological role, in the hair cortex, hair keratin intermediate filaments are embedded in an interfilamentous matrix, consisting of hair keratin-associated proteins (KRTAP), which are essential for the formation of a rigid and resistant hair shaft through their extensive disulfide bond cross-linking with abundant cysteine residues of hair keratins. The matrix proteins include the high-sulfur and high-glycine-tyrosine keratins. The polypeptide is Keratin-associated protein 19-7 (KRTAP19-7) (Homo sapiens (Human)).